Reading from the N-terminus, the 31-residue chain is U14-ctenitoxin-Co1a (31 aa).

Post-translationally, disulfide bonds are present. As to expression, expressed by the venom gland.

The protein resides in the secreted. Functionally, omega-agatoxins are antagonists of voltage-gated calcium channels (Cav). This Ctenus ornatus (Brazilian spider) protein is U14-ctenitoxin-Co1a.